A 412-amino-acid chain; its full sequence is Short-chain specific acyl-CoA dehydrogenase, mitochondrial (412 aa).

The transit peptide at 1 to 24 (MAAALLARAGGSLGRALRARDWRR) directs the protein to the mitochondrion. Position 27 is a phosphothreonine (Thr-27). Lys-51 is modified (N6-acetyllysine; alternate). Residue Lys-51 is modified to N6-succinyllysine; alternate. Lys-72 is subject to N6-acetyllysine. Position 129 is an N6-acetyllysine; alternate (Lys-129). The residue at position 129 (Lys-129) is an N6-succinyllysine; alternate. FAD is bound by residues 152–161 (FALSEPGNGS) and 185–187 (WIT). A substrate-binding site is contributed by Ser-161. Lys-208 carries the post-translational modification N6-acetyllysine. Lys-262 carries the N6-acetyllysine; alternate modification. Lys-262 is modified (N6-succinyllysine; alternate). 269 to 272 (DMGR) serves as a coordination point for substrate. Lys-292 carries the N6-acetyllysine modification. An FAD-binding site is contributed by Arg-297. Lys-306 carries the N6-acetyllysine; alternate modification. Lys-306 is subject to N6-succinyllysine; alternate. Residue 365 to 369 (QILGG) participates in FAD binding. Glu-392 functions as the Proton acceptor in the catalytic mechanism. 394–396 (TSE) serves as a coordination point for FAD.

This sequence belongs to the acyl-CoA dehydrogenase family. As to quaternary structure, homotetramer. It depends on FAD as a cofactor.

Its subcellular location is the mitochondrion matrix. It carries out the reaction a short-chain 2,3-saturated fatty acyl-CoA + oxidized [electron-transfer flavoprotein] + H(+) = a short-chain (2E)-enoyl-CoA + reduced [electron-transfer flavoprotein]. The catalysed reaction is butanoyl-CoA + oxidized [electron-transfer flavoprotein] + H(+) = (2E)-butenoyl-CoA + reduced [electron-transfer flavoprotein]. It catalyses the reaction pentanoyl-CoA + oxidized [electron-transfer flavoprotein] + H(+) = (2E)-pentenoyl-CoA + reduced [electron-transfer flavoprotein]. The enzyme catalyses hexanoyl-CoA + oxidized [electron-transfer flavoprotein] + H(+) = (2E)-hexenoyl-CoA + reduced [electron-transfer flavoprotein]. It participates in lipid metabolism; mitochondrial fatty acid beta-oxidation. In terms of biological role, short-chain specific acyl-CoA dehydrogenase is one of the acyl-CoA dehydrogenases that catalyze the first step of mitochondrial fatty acid beta-oxidation, an aerobic process breaking down fatty acids into acetyl-CoA and allowing the production of energy from fats. The first step of fatty acid beta-oxidation consists in the removal of one hydrogen from C-2 and C-3 of the straight-chain fatty acyl-CoA thioester, resulting in the formation of trans-2-enoyl-CoA. Among the different mitochondrial acyl-CoA dehydrogenases, short-chain specific acyl-CoA dehydrogenase acts specifically on acyl-CoAs with saturated 4 to 6 carbons long primary chains. The chain is Short-chain specific acyl-CoA dehydrogenase, mitochondrial (Acads) from Rattus norvegicus (Rat).